The primary structure comprises 86 residues: Muscarinic toxin 38 (86 aa).

The N-terminal stretch at 1–21 is a signal peptide; the sequence is MKTLLLTLVVVTIVCLDLGYT. Disulfide bonds link cysteine 24-cysteine 45, cysteine 38-cysteine 63, cysteine 67-cysteine 78, and cysteine 79-cysteine 84.

The protein belongs to the three-finger toxin family. Short-chain subfamily. Aminergic toxin sub-subfamily. Monomer. Expressed by the venom gland.

It is found in the secreted. Functionally, binds to the muscarinic acetylcholine receptor (CHRM). The chain is Muscarinic toxin 38 from Ophiophagus hannah (King cobra).